The sequence spans 325 residues: Beta-ketoacyl-[acyl-carrier-protein] synthase III (325 aa).

Residues Cys-112 and His-250 contribute to the active site. The ACP-binding stretch occupies residues 251-255 (QANSR). Asn-280 is an active-site residue.

It belongs to the thiolase-like superfamily. FabH family. As to quaternary structure, homodimer.

It is found in the cytoplasm. It carries out the reaction malonyl-[ACP] + acetyl-CoA + H(+) = 3-oxobutanoyl-[ACP] + CO2 + CoA. It functions in the pathway lipid metabolism; fatty acid biosynthesis. Catalyzes the condensation reaction of fatty acid synthesis by the addition to an acyl acceptor of two carbons from malonyl-ACP. Catalyzes the first condensation reaction which initiates fatty acid synthesis and may therefore play a role in governing the total rate of fatty acid production. Possesses both acetoacetyl-ACP synthase and acetyl transacylase activities. Its substrate specificity determines the biosynthesis of branched-chain and/or straight-chain of fatty acids. In Lactococcus lactis subsp. lactis (strain IL1403) (Streptococcus lactis), this protein is Beta-ketoacyl-[acyl-carrier-protein] synthase III.